The following is a 331-amino-acid chain: 6-phosphogluconolactonase (331 aa).

The protein belongs to the cycloisomerase 2 family.

It catalyses the reaction 6-phospho-D-glucono-1,5-lactone + H2O = 6-phospho-D-gluconate + H(+). Its pathway is carbohydrate degradation; pentose phosphate pathway; D-ribulose 5-phosphate from D-glucose 6-phosphate (oxidative stage): step 2/3. In terms of biological role, catalyzes the hydrolysis of 6-phosphogluconolactone to 6-phosphogluconate. This is 6-phosphogluconolactonase from Salmonella arizonae (strain ATCC BAA-731 / CDC346-86 / RSK2980).